We begin with the raw amino-acid sequence, 412 residues long: MSVALLWVVSPCDVSNGTSFMESVREGNRFFDSSRHRNLVSNERINRGGGKQTNNGRKFSVRSAILATPSGERTMTSEQMVYDVVLRQAALVKRQLRSTNELEVKPDIPIPGNLGLLSEAYDRCGEVCAEYAKTFNLGTMLMTPERRRAIWAIYVWCRRTDELVDGPNASYITPAALDRWENRLEDVFNGRPFDMLDGALSDTVSNFPVDIQPFRDMIEGMRMDLRKSRYKNFDELYLYCYYVAGTVGLMSVPIMGIAPESKATTESVYNAALALGIANQLTNILRDVGEDARRGRVYLPQDELAQAGLSDEDIFAGRVTDKWRIFMKKQIHRARKFFDEAEKGVTELSSASRFPVWASLVLYRKILDEIEANDYNNFTKRAYVSKSKKLIALPIAYAKSLVPPTKTASLQR.

The transit peptide at 1 to 129 (MSVALLWVVS…AYDRCGEVCA (129 aa)) directs the protein to the chloroplast.

This sequence belongs to the phytoene/squalene synthase family. Monomer. Interacts with SGR1.

It is found in the plastid. The protein resides in the chloroplast. The catalysed reaction is 2 (2E,6E,10E)-geranylgeranyl diphosphate = 15-cis-phytoene + 2 diphosphate. Its pathway is carotenoid biosynthesis; phytoene biosynthesis; all-trans-phytoene from geranylgeranyl diphosphate: step 1/1. Its function is as follows. Catalyzes the reaction from prephytoene diphosphate to phytoene. The sequence is that of Phytoene synthase 1, chloroplastic (PSY1) from Solanum lycopersicum (Tomato).